A 199-amino-acid chain; its full sequence is Guanylate kinase (199 aa).

The Guanylate kinase-like domain occupies 20–198 (GKLIVLTGPS…ALQAIEVALF (179 aa)). 27–34 (GPSGVGKG) lines the ATP pocket.

The protein belongs to the guanylate kinase family.

The protein resides in the cytoplasm. It carries out the reaction GMP + ATP = GDP + ADP. Functionally, essential for recycling GMP and indirectly, cGMP. This chain is Guanylate kinase, found in Trichormus variabilis (strain ATCC 29413 / PCC 7937) (Anabaena variabilis).